A 308-amino-acid chain; its full sequence is Hydroxyacylglutathione hydrolase, mitochondrial (308 aa).

A mitochondrion-targeting transit peptide spans 1–13 (MVVGRGLLGRRSL). His102, His104, Asp106, and His107 together coordinate Zn(2+). Residue Lys116 is modified to N6-acetyllysine. 2 residues coordinate Zn(2+): His158 and Asp182. Residues 191–193 (KFY) and 221–223 (HEY) contribute to the substrate site. A Zn(2+)-binding site is contributed by His221. Lys229 bears the N6-acetyllysine; alternate mark. Lys229 is subject to N6-succinyllysine; alternate. 297 to 300 (RREK) provides a ligand contact to substrate.

Belongs to the metallo-beta-lactamase superfamily. Glyoxalase II family. Monomer. Zn(2+) is required as a cofactor. As to expression, expressed in liver and kidney.

The protein resides in the mitochondrion matrix. The protein localises to the cytoplasm. The enzyme catalyses an S-(2-hydroxyacyl)glutathione + H2O = a 2-hydroxy carboxylate + glutathione + H(+). It catalyses the reaction (R)-S-lactoylglutathione + H2O = (R)-lactate + glutathione + H(+). It functions in the pathway secondary metabolite metabolism; methylglyoxal degradation; (R)-lactate from methylglyoxal: step 2/2. In terms of biological role, thiolesterase that catalyzes the hydrolysis of S-D-lactoyl-glutathione to form glutathione and D-lactic acid. The protein is Hydroxyacylglutathione hydrolase, mitochondrial (HAGH) of Homo sapiens (Human).